A 449-amino-acid chain; its full sequence is Kynurenine 3-monooxygenase (449 aa).

This sequence belongs to the aromatic-ring hydroxylase family. KMO subfamily. The cofactor is FAD.

The catalysed reaction is L-kynurenine + NADPH + O2 + H(+) = 3-hydroxy-L-kynurenine + NADP(+) + H2O. Its pathway is cofactor biosynthesis; NAD(+) biosynthesis; quinolinate from L-kynurenine: step 1/3. Catalyzes the hydroxylation of L-kynurenine (L-Kyn) to form 3-hydroxy-L-kynurenine (L-3OHKyn). Required for synthesis of quinolinic acid. The protein is Kynurenine 3-monooxygenase of Legionella pneumophila (strain Lens).